Here is a 482-residue protein sequence, read N- to C-terminus: Protein nucleotidyltransferase YdiU (482 aa).

8 residues coordinate ATP: G88, G90, R91, K111, D123, G124, R174, and R181. Catalysis depends on D250, which acts as the Proton acceptor. Mg(2+) is bound by residues N251 and D260. D260 provides a ligand contact to ATP.

Belongs to the SELO family. Mg(2+) serves as cofactor. Requires Mn(2+) as cofactor.

It carries out the reaction L-seryl-[protein] + ATP = 3-O-(5'-adenylyl)-L-seryl-[protein] + diphosphate. The catalysed reaction is L-threonyl-[protein] + ATP = 3-O-(5'-adenylyl)-L-threonyl-[protein] + diphosphate. The enzyme catalyses L-tyrosyl-[protein] + ATP = O-(5'-adenylyl)-L-tyrosyl-[protein] + diphosphate. It catalyses the reaction L-histidyl-[protein] + UTP = N(tele)-(5'-uridylyl)-L-histidyl-[protein] + diphosphate. It carries out the reaction L-seryl-[protein] + UTP = O-(5'-uridylyl)-L-seryl-[protein] + diphosphate. The catalysed reaction is L-tyrosyl-[protein] + UTP = O-(5'-uridylyl)-L-tyrosyl-[protein] + diphosphate. In terms of biological role, nucleotidyltransferase involved in the post-translational modification of proteins. It can catalyze the addition of adenosine monophosphate (AMP) or uridine monophosphate (UMP) to a protein, resulting in modifications known as AMPylation and UMPylation. The chain is Protein nucleotidyltransferase YdiU from Cronobacter sakazakii (strain ATCC BAA-894) (Enterobacter sakazakii).